Consider the following 529-residue polypeptide: Non-reducing end alpha-L-arabinofuranosidase BoGH43B (529 aa).

A signal peptide spans 1–23; it reads MMKNSCRLLLILIGLWMANVSLA. D38 functions as the Proton acceptor in the catalytic mechanism. E198 serves as the catalytic Proton donor.

It belongs to the glycosyl hydrolase 43 family.

It localises to the periplasm. It carries out the reaction Hydrolysis of terminal non-reducing alpha-L-arabinofuranoside residues in alpha-L-arabinosides.. It functions in the pathway glucan metabolism; xyloglucan degradation. Functionally, alpha-L-arabinofuranosidase involved in xyloglucan degradation by mediating the cleavage of terminal non-reducing alpha-L-arabinofuranoside residues in xyloglucan branches, converting the 'S' units to 'X' units. In Bacteroides ovatus (strain ATCC 8483 / DSM 1896 / JCM 5824 / BCRC 10623 / CCUG 4943 / NCTC 11153), this protein is Non-reducing end alpha-L-arabinofuranosidase BoGH43B.